Reading from the N-terminus, the 88-residue chain is Arminin 7965 (88 aa).

Residues 1-18 (MKTVFAILFLTFIAFTYA) form the signal peptide. Residues 19-57 (KSYEDVKEEIKNEVEREIFEDLEEESDVLDSNVRELNDA) constitute a propeptide that is removed on maturation. A85 carries the alanine amide modification.

Belongs to the arminin family. In terms of tissue distribution, expressed in entodermal epithelium along the body column.

It localises to the secreted. The protein localises to the target cell membrane. Its function is as follows. Antimicrobial peptide with a broad-spectrum antimicrobial activity. Keeps its antibacterial activity under a wide range of salt concentrations that mimic physiological conditions of human blood, which is surprising, since Hydra is an obligate freshwater animal with nearly no salt tolerance. Does not affect red blood cells. The sequence is that of Arminin 7965 from Hydra vulgaris (Hydra).